The primary structure comprises 116 residues: NADPH-dependent 7-cyano-7-deazaguanine reductase (116 aa).

Cysteine 31 serves as the catalytic Thioimide intermediate. Residue aspartate 38 is the Proton donor of the active site. Residues 53 to 55 and 72 to 73 contribute to the substrate site; these read VEL and YE.

Belongs to the GTP cyclohydrolase I family. QueF type 1 subfamily.

It is found in the cytoplasm. It catalyses the reaction 7-aminomethyl-7-carbaguanine + 2 NADP(+) = 7-cyano-7-deazaguanine + 2 NADPH + 3 H(+). It participates in tRNA modification; tRNA-queuosine biosynthesis. In terms of biological role, catalyzes the NADPH-dependent reduction of 7-cyano-7-deazaguanine (preQ0) to 7-aminomethyl-7-deazaguanine (preQ1). This chain is NADPH-dependent 7-cyano-7-deazaguanine reductase, found in Chlorobium phaeobacteroides (strain DSM 266 / SMG 266 / 2430).